We begin with the raw amino-acid sequence, 252 residues long: Lipoprotein PrgK (252 aa).

The N-terminal stretch at 1 to 17 (MIRRYLYTFLLVMTLAG) is a signal peptide. Cysteine 18 carries the N-palmitoyl cysteine lipid modification. Cysteine 18 carries the S-diacylglycerol cysteine lipid modification. The chain crosses the membrane as a helical span at residues 207–227 (FATSWIVLIILLSVMSAGFGV).

The protein belongs to the YscJ lipoprotein family.

The protein localises to the cell outer membrane. Required for invasion of epithelial cells. Could be involved in protein secretion. This Salmonella typhimurium (strain LT2 / SGSC1412 / ATCC 700720) protein is Lipoprotein PrgK (prgK).